Reading from the N-terminus, the 161-residue chain is MTNGNGTPPEAAPPPQLNVLAQYTKDLSFENPNAPASLAPQPQQPAINIQINVGAKALAENEYEVTLSIEGKAEGASSLIFSFELQYAGVFRIVNVPQENLHPLVMIECPRLLFPFAREIIATAVRDGGFPPLMLDPVDFVGLYRQNMDRQAAEAQQASPN.

This sequence belongs to the SecB family. As to quaternary structure, homotetramer, a dimer of dimers. One homotetramer interacts with 1 SecA dimer.

The protein localises to the cytoplasm. One of the proteins required for the normal export of preproteins out of the cell cytoplasm. It is a molecular chaperone that binds to a subset of precursor proteins, maintaining them in a translocation-competent state. It also specifically binds to its receptor SecA. The polypeptide is Protein-export protein SecB (Rhodopseudomonas palustris (strain BisA53)).